The sequence spans 881 residues: Valine--tRNA ligase (881 aa).

The 'HIGH' region signature appears at 49–59 (PNVTGKLHLGH). The 'KMSKS' region signature appears at 526–530 (KMSKS). Lysine 529 contacts ATP. Positions 810–881 (LADLINLDEE…VRQRLADLEK (72 aa)) form a coiled coil.

The protein belongs to the class-I aminoacyl-tRNA synthetase family. ValS type 1 subfamily. In terms of assembly, monomer.

Its subcellular location is the cytoplasm. The enzyme catalyses tRNA(Val) + L-valine + ATP = L-valyl-tRNA(Val) + AMP + diphosphate. In terms of biological role, catalyzes the attachment of valine to tRNA(Val). As ValRS can inadvertently accommodate and process structurally similar amino acids such as threonine, to avoid such errors, it has a 'posttransfer' editing activity that hydrolyzes mischarged Thr-tRNA(Val) in a tRNA-dependent manner. This chain is Valine--tRNA ligase, found in Bacillus cereus (strain ATCC 14579 / DSM 31 / CCUG 7414 / JCM 2152 / NBRC 15305 / NCIMB 9373 / NCTC 2599 / NRRL B-3711).